The sequence spans 1017 residues: Semaphorin-6D (1017 aa).

The signal sequence occupies residues methionine 1–alanine 20. Over valine 21 to asparagine 606 the chain is Extracellular. In terms of domain architecture, Sema spans aspartate 27 to leucine 512. Residue asparagine 51 is glycosylated (N-linked (GlcNAc...) asparagine). Intrachain disulfides connect cysteine 108-cysteine 118, cysteine 136-cysteine 145, cysteine 259-cysteine 370, and cysteine 284-cysteine 329. A glycan (N-linked (GlcNAc...) asparagine) is linked at asparagine 283. N-linked (GlcNAc...) asparagine glycans are attached at residues asparagine 435 and asparagine 461. 4 disulfide bridges follow: cysteine 477-cysteine 506, cysteine 515-cysteine 533, cysteine 521-cysteine 568, and cysteine 525-cysteine 541. In terms of domain architecture, PSI spans arginine 514–histidine 569. Residues valine 607 to valine 627 form a helical membrane-spanning segment. The Cytoplasmic segment spans residues tyrosine 628 to tyrosine 1017. Phosphoserine occurs at positions 667, 678, and 688. Disordered regions lie at residues serine 688–glutamate 719, alanine 731–proline 769, threonine 783–aspartate 818, and leucine 873–serine 912. Residue threonine 717 is modified to Phosphothreonine. Basic and acidic residues predominate over residues serine 734–threonine 749. Phosphoserine occurs at positions 875, 901, and 927. The segment covering serine 875–threonine 886 has biased composition (polar residues). Over residues leucine 965–leucine 981 the composition is skewed to polar residues. The segment at leucine 965–tyrosine 1017 is disordered.

Belongs to the semaphorin family.

The protein resides in the cell membrane. In terms of biological role, shows growth cone collapsing activity on dorsal root ganglion (DRG) neurons in vitro. May be a stop signal for the DRG neurons in their target areas, and possibly also for other neurons. May also be involved in the maintenance and remodeling of neuronal connections. Ligand of TREM2 with PLXNA1 as coreceptor in dendritic cells, plays a role in the generation of immune responses and skeletal homeostasis. This chain is Semaphorin-6D (SEMA6D), found in Pongo abelii (Sumatran orangutan).